The following is a 309-amino-acid chain: Beta-lactamase (309 aa).

Residues 1–28 form the signal peptide; it reads MMILKNKRMLKIGICVGILGLSITSLEA. The active-site Acyl-ester intermediate is Ser92. Glu188 functions as the Proton acceptor in the catalytic mechanism. 254-256 provides a ligand contact to substrate; it reads KSG.

Belongs to the class-A beta-lactamase family.

It carries out the reaction a beta-lactam + H2O = a substituted beta-amino acid. This protein is a beta-lactamase with a substrate specificity for penicillins. The chain is Beta-lactamase (bla) from Bacillus thuringiensis.